The primary structure comprises 527 residues: Hopanoid C-2 methylase (527 aa).

One can recognise a B12-binding domain in the interval 36-148 (VAAFMPPQGL…AKLTHDVTRP (113 aa)). Residues 173–408 (AECSKYLLGS…HDQVVAMWKD (236 aa)) enclose the Radical SAM core domain. 3 residues coordinate [4Fe-4S] cluster: C189, C193, and C196.

This sequence belongs to the radical SAM superfamily. The cofactor is [4Fe-4S] cluster.

In terms of biological role, required for methylation of hopanoids at the C-2 position. This Rhodopseudomonas palustris (strain TIE-1) protein is Hopanoid C-2 methylase.